The following is a 241-amino-acid chain: ATP synthase subunit 4, mitochondrial (241 aa).

The N-terminal 35 residues, 1–35 (MASRLARTAVGAARLRPSVVPRVLPALSTVASPRY), are a transit peptide targeting the mitochondrion.

Belongs to the eukaryotic ATPase B chain family. As to quaternary structure, F-type ATPases have 2 components, CF(1) - the catalytic core - and CF(0) - the membrane proton channel. In yeast, the dimeric form of ATP synthase consists of 17 polypeptides: alpha, beta, gamma, delta, epsilon, 4 (B), 5 (OSCP), 6 (A), 8, 9 (C), d, E (Tim11), f, g, h, i/j and k.

The protein resides in the mitochondrion. The protein localises to the mitochondrion inner membrane. Functionally, mitochondrial membrane ATP synthase (F(1)F(0) ATP synthase or Complex V) produces ATP from ADP in the presence of a proton gradient across the membrane which is generated by electron transport complexes of the respiratory chain. F-type ATPases consist of two structural domains, F(1) - containing the extramembraneous catalytic core, and F(0) - containing the membrane proton channel, linked together by a central stalk and a peripheral stalk. During catalysis, ATP synthesis in the catalytic domain of F(1) is coupled via a rotary mechanism of the central stalk subunits to proton translocation. Part of the complex F(0) domain and the peripheric stalk, which acts as a stator to hold the catalytic alpha(3)beta(3) subcomplex and subunit a/atp6 static relative to the rotary elements. The protein is ATP synthase subunit 4, mitochondrial (atp-3) of Neurospora crassa (strain ATCC 24698 / 74-OR23-1A / CBS 708.71 / DSM 1257 / FGSC 987).